The chain runs to 530 residues: Phosphoenolpyruvate carboxykinase (ATP) (530 aa).

Positions 58, 195, and 201 each coordinate substrate. ATP is bound by residues Lys-201, His-220, and 236-244 (GLSGTGKTT). Residues Lys-201 and His-220 each coordinate Mn(2+). Asp-257 serves as a coordination point for Mn(2+). Residues Glu-285, Arg-321, 440–441 (RI), and Thr-446 each bind ATP. Residue Arg-321 coordinates substrate.

The protein belongs to the phosphoenolpyruvate carboxykinase (ATP) family. The cofactor is Mn(2+).

It is found in the cytoplasm. The enzyme catalyses oxaloacetate + ATP = phosphoenolpyruvate + ADP + CO2. It participates in carbohydrate biosynthesis; gluconeogenesis. Functionally, involved in the gluconeogenesis. Catalyzes the conversion of oxaloacetate (OAA) to phosphoenolpyruvate (PEP) through direct phosphoryl transfer between the nucleoside triphosphate and OAA. In Staphylococcus epidermidis (strain ATCC 35984 / DSM 28319 / BCRC 17069 / CCUG 31568 / BM 3577 / RP62A), this protein is Phosphoenolpyruvate carboxykinase (ATP).